We begin with the raw amino-acid sequence, 99 residues long: Large ribosomal subunit protein uL23 (99 aa).

Belongs to the universal ribosomal protein uL23 family. As to quaternary structure, part of the 50S ribosomal subunit. Contacts protein L29, and trigger factor when it is bound to the ribosome.

In terms of biological role, one of the early assembly proteins it binds 23S rRNA. One of the proteins that surrounds the polypeptide exit tunnel on the outside of the ribosome. Forms the main docking site for trigger factor binding to the ribosome. The chain is Large ribosomal subunit protein uL23 from Francisella tularensis subsp. tularensis (strain SCHU S4 / Schu 4).